A 316-amino-acid chain; its full sequence is ATP synthase gamma chain (316 aa).

Belongs to the ATPase gamma chain family. In terms of assembly, F-type ATPases have 2 components, CF(1) - the catalytic core - and CF(0) - the membrane proton channel. CF(1) has five subunits: alpha(3), beta(3), gamma(1), delta(1), epsilon(1). CF(0) has three main subunits: a, b and c.

Its subcellular location is the cellular thylakoid membrane. In terms of biological role, produces ATP from ADP in the presence of a proton gradient across the membrane. The gamma chain is believed to be important in regulating ATPase activity and the flow of protons through the CF(0) complex. This is ATP synthase gamma chain from Synechococcus sp. (strain CC9605).